The primary structure comprises 346 residues: Large ribosomal subunit protein uL10 (346 aa).

Positions 305-346 (EVPAAPAPEAKEEKKEEAEEEEEEKKEVSEEDLSAGLGALFG) are disordered. The span at 322–337 (AEEEEEEKKEVSEEDL) shows a compositional bias: acidic residues.

This sequence belongs to the universal ribosomal protein uL10 family. As to quaternary structure, part of the 50S ribosomal subunit. Forms part of the ribosomal stalk which helps the ribosome interact with GTP-bound translation factors. Forms a heptameric L10(L12)2(L12)2(L12)2 complex, where L10 forms an elongated spine to which the L12 dimers bind in a sequential fashion.

Its function is as follows. Forms part of the ribosomal stalk, playing a central role in the interaction of the ribosome with GTP-bound translation factors. The protein is Large ribosomal subunit protein uL10 of Ignicoccus hospitalis (strain KIN4/I / DSM 18386 / JCM 14125).